A 305-amino-acid chain; its full sequence is Undecaprenyl-diphosphatase (305 aa).

8 helical membrane passes run 18 to 38 (GVTELFPVSSLGHAVLVPALV), 55 to 75 (YLAFIVGLHVATAAALLVFFW), 103 to 123 (WLIVVGTIPVGLAGLALEQLF), 130 to 150 (PVPAAAFLLLNGVALYAGEVL), 187 to 207 (GVLIGAAQILALLPGISRSGI), 225 to 245 (FSFLLATPIILAAGVYKIPEL), 246 to 266 (FGPLGAGIGGQVLAGSIASFV), and 284 to 304 (LTPFAIYCAVAGGASLVWLAL).

Belongs to the UppP family.

The protein localises to the cell membrane. It catalyses the reaction di-trans,octa-cis-undecaprenyl diphosphate + H2O = di-trans,octa-cis-undecaprenyl phosphate + phosphate + H(+). In terms of biological role, catalyzes the dephosphorylation of undecaprenyl diphosphate (UPP). Confers resistance to bacitracin. The chain is Undecaprenyl-diphosphatase from Mycolicibacterium paratuberculosis (strain ATCC BAA-968 / K-10) (Mycobacterium paratuberculosis).